We begin with the raw amino-acid sequence, 82 residues long: Defensin-like protein 156 (82 aa).

An N-terminal signal peptide occupies residues methionine 1–glycine 27. Cystine bridges form between cysteine 31–cysteine 77, cysteine 41–cysteine 60, cysteine 46–cysteine 71, and cysteine 50–cysteine 73.

It belongs to the DEFL family. As to expression, expressed in flower buds, but not in stems, roots or rosette leaves.

It is found in the secreted. This Arabidopsis thaliana (Mouse-ear cress) protein is Defensin-like protein 156 (LCR21).